Here is a 783-residue protein sequence, read N- to C-terminus: LPS-assembly protein LptD (783 aa).

Residues 1–24 (MSCFSRTFLAASISAALFAPQIQA) form the signal peptide.

It belongs to the LptD family. Component of the lipopolysaccharide transport and assembly complex. Interacts with LptE and LptA.

It is found in the cell outer membrane. Its function is as follows. Together with LptE, is involved in the assembly of lipopolysaccharide (LPS) at the surface of the outer membrane. This Vibrio cholerae serotype O1 (strain ATCC 39315 / El Tor Inaba N16961) protein is LPS-assembly protein LptD.